A 149-amino-acid polypeptide reads, in one-letter code: Nucleoside diphosphate kinase (149 aa).

Residues lysine 9, phenylalanine 57, arginine 85, threonine 91, arginine 102, and asparagine 112 each coordinate ATP. Residue histidine 115 is the Pros-phosphohistidine intermediate of the active site.

Belongs to the NDK family. In terms of assembly, homotetramer. Mg(2+) is required as a cofactor.

It is found in the cytoplasm. It carries out the reaction a 2'-deoxyribonucleoside 5'-diphosphate + ATP = a 2'-deoxyribonucleoside 5'-triphosphate + ADP. It catalyses the reaction a ribonucleoside 5'-diphosphate + ATP = a ribonucleoside 5'-triphosphate + ADP. In terms of biological role, major role in the synthesis of nucleoside triphosphates other than ATP. The ATP gamma phosphate is transferred to the NDP beta phosphate via a ping-pong mechanism, using a phosphorylated active-site intermediate. This Gloeobacter violaceus (strain ATCC 29082 / PCC 7421) protein is Nucleoside diphosphate kinase.